A 260-amino-acid polypeptide reads, in one-letter code: Methylthioribulose-1-phosphate dehydratase (260 aa).

A disordered region spans residues 1–26; sequence MTPPTTGLPAENTTDDNDHLVQSDDP. Residues 16-26 are compositionally biased toward basic and acidic residues; that stretch reads DNDHLVQSDDP. Cys109 serves as a coordination point for substrate. Residues His127 and His129 each coordinate Zn(2+). Catalysis depends on Glu154, which acts as the Proton donor/acceptor. Zn(2+) is bound at residue His211.

The protein belongs to the aldolase class II family. MtnB subfamily. Requires Zn(2+) as cofactor.

Its subcellular location is the cytoplasm. It catalyses the reaction 5-(methylsulfanyl)-D-ribulose 1-phosphate = 5-methylsulfanyl-2,3-dioxopentyl phosphate + H2O. It functions in the pathway amino-acid biosynthesis; L-methionine biosynthesis via salvage pathway; L-methionine from S-methyl-5-thio-alpha-D-ribose 1-phosphate: step 2/6. Catalyzes the dehydration of methylthioribulose-1-phosphate (MTRu-1-P) into 2,3-diketo-5-methylthiopentyl-1-phosphate (DK-MTP-1-P). This chain is Methylthioribulose-1-phosphate dehydratase, found in Podospora anserina (strain S / ATCC MYA-4624 / DSM 980 / FGSC 10383) (Pleurage anserina).